A 155-amino-acid polypeptide reads, in one-letter code: Large ribosomal subunit protein bL9c (155 aa).

It belongs to the bacterial ribosomal protein bL9 family.

The protein localises to the plastid. The protein resides in the chloroplast. In terms of biological role, binds to the 23S rRNA. This chain is Large ribosomal subunit protein bL9c, found in Porphyra purpurea (Red seaweed).